The primary structure comprises 207 residues: Small ribosomal subunit protein uS7y (207 aa).

Residue Ala-2 is modified to N-acetylalanine.

It belongs to the universal ribosomal protein uS7 family. In terms of tissue distribution, expressed in root tips, lateral root primordia, leaf primordia, shoot apical meristem and vasculature of cotyledons.

The sequence is that of Small ribosomal subunit protein uS7y from Arabidopsis thaliana (Mouse-ear cress).